The sequence spans 283 residues: Bifunctional protein FolD (283 aa).

166-168 (GAS) is a binding site for NADP(+).

Belongs to the tetrahydrofolate dehydrogenase/cyclohydrolase family. Homodimer.

It catalyses the reaction (6R)-5,10-methylene-5,6,7,8-tetrahydrofolate + NADP(+) = (6R)-5,10-methenyltetrahydrofolate + NADPH. The enzyme catalyses (6R)-5,10-methenyltetrahydrofolate + H2O = (6R)-10-formyltetrahydrofolate + H(+). Its pathway is one-carbon metabolism; tetrahydrofolate interconversion. Catalyzes the oxidation of 5,10-methylenetetrahydrofolate to 5,10-methenyltetrahydrofolate and then the hydrolysis of 5,10-methenyltetrahydrofolate to 10-formyltetrahydrofolate. This is Bifunctional protein FolD from Coxiella burnetii (strain Dugway 5J108-111).